Reading from the N-terminus, the 960-residue chain is Ran GTPase-activating protein 2 (960 aa).

LRR repeat units lie at residues 69-92, 132-156, 162-185, 227-254, and 313-340; these read HLNLEVLDFRGNTLSVLAGKLIAE, GCRLTTLDLSDNAFGAGLSTSLYNF, LYSLENLILNNNGLGLAGKTVGKA, LGTLEEIRLPQNGIRDDGIIALAEAFRM, and RDCLKKVVLSGNNITSDVIDEIGACFNS. The tract at residues 370–408 is disordered; that stretch reads NIDFGRRGDDELLSSDEEEEQGAEDASMEEDAFNTSRET. A compositionally biased stretch (acidic residues) spans 380–401; sequence ELLSSDEEEEQGAEDASMEEDA. LRR repeat units follow at residues 475–498, 538–561, 568–595, and 663–685; these read ASSMKALELRGNTLGIAAGNVIAK, GCKIKELDLSDNAFGPIGADALKD, SFSLEVLKLNNNGLGIGGKQIAKSLTEC, and NRNLRYLWLEDNTVLPKGAKALA. Positions 777–819 are disordered; it reads PENVNVGDEDDDLGSLDGDQEEYNSKSSDSEDADLDDDDEDDD. Acidic residues-rich tracts occupy residues 783–798 and 806–819; these read GDEDDDLGSLDGDQEE and SEDADLDDDDEDDD.

The protein resides in the nucleus. Functionally, GTPase system comprising ran-1, ran-2 and ran-3 is essential in nucleocytoplasmic trafficking. Ran-2 is a GTPase activator for the nuclear RAS-related regulatory protein Ran, converting it to the putatively inactive GDP-bound state. Required for correct chromosome alignment and segregation on the metaphase plate. This is Ran GTPase-activating protein 2 (ran-2) from Caenorhabditis elegans.